We begin with the raw amino-acid sequence, 512 residues long: MSESRWKGALLVAGTTSDAGKSVLVAGLCRMLARRGVRVAPFKAQNMSNNSVVTLDGGEIGRAQALQAAACGLEPSVRFNPVLLKPGSDRTSQLVVRGRAVTSVGARDYIEHRQHLRAVVAEELASLRADYDVVICEGAGSPAEINLRATDLANMGLARAAGLPVIVVGDIDRGGVLAHLFGTVAVLGPDDQALIAGFVINKFRGDVSLLGPGLEQLTAVTGRPTLGVIPFAEDLWLDAEDSLGVVGDAPVGRPAPPIGDDWLRVAAIRLPRISNSTDVEALACEPGVSVRWITDPSRLQDTDLIVLPGSKSTVSDLEWLRRNGIADAIAAHAKRGGPVLGVCGGYQMLGSVIVDDVESGRGAVPGLGLLDLEVEFAPDKVLAQVRGNAHGVPVSGYEIHHGRVRRNGDQPLLHASSGAAEGSIRGAVYGTHWHGLLETDRFRRLLLDDVAEHAGRTGFVTAPDTDVAAIRTAQLDLLADLVEQNLDLRALEDLLGAGAPEGLPAIASTLVS.

The region spanning 262–442 (WLRVAAIRLP…WHGLLETDRF (181 aa)) is the GATase cobBQ-type domain. The Nucleophile role is filled by cysteine 343. Histidine 434 is a catalytic residue.

It belongs to the CobB/CobQ family. CobQ subfamily.

The protein operates within cofactor biosynthesis; adenosylcobalamin biosynthesis. Functionally, catalyzes amidations at positions B, D, E, and G on adenosylcobyrinic A,C-diamide. NH(2) groups are provided by glutamine, and one molecule of ATP is hydrogenolyzed for each amidation. This chain is Cobyric acid synthase, found in Rhodococcus jostii (strain RHA1).